We begin with the raw amino-acid sequence, 51 residues long: Sperm protamine P1 (51 aa).

2 cysteine pairs are disulfide-bonded: Cys7/Cys15 and Cys38/Cys48.

The protein belongs to the protamine P1 family. As to quaternary structure, cross-linked by interchain disulfide bonds around the DNA-helix. Post-translationally, phosphorylated by SRPK1. In terms of tissue distribution, testis.

The protein resides in the nucleus. It is found in the chromosome. Functionally, protamines substitute for histones in the chromatin of sperm during the haploid phase of spermatogenesis. They compact sperm DNA into a highly condensed, stable and inactive complex. The sequence is that of Sperm protamine P1 (Prm1) from Mus musculus (Mouse).